Here is a 198-residue protein sequence, read N- to C-terminus: ATP-dependent Clp protease proteolytic subunit (198 aa).

S98 (nucleophile) is an active-site residue. Residue H123 is part of the active site.

It belongs to the peptidase S14 family. Fourteen ClpP subunits assemble into 2 heptameric rings which stack back to back to give a disk-like structure with a central cavity, resembling the structure of eukaryotic proteasomes.

The protein localises to the cytoplasm. The enzyme catalyses Hydrolysis of proteins to small peptides in the presence of ATP and magnesium. alpha-casein is the usual test substrate. In the absence of ATP, only oligopeptides shorter than five residues are hydrolyzed (such as succinyl-Leu-Tyr-|-NHMec, and Leu-Tyr-Leu-|-Tyr-Trp, in which cleavage of the -Tyr-|-Leu- and -Tyr-|-Trp bonds also occurs).. In terms of biological role, cleaves peptides in various proteins in a process that requires ATP hydrolysis. Has a chymotrypsin-like activity. Plays a major role in the degradation of misfolded proteins. This Bacillus pumilus (strain SAFR-032) protein is ATP-dependent Clp protease proteolytic subunit.